The sequence spans 190 residues: Class III hydrophobin F (190 aa).

The first 18 residues, 1 to 18, serve as a signal peptide directing secretion; it reads MRPITILCTLATLSTTLA. 4 disulfides stabilise this stretch: Cys54–Cys115, Cys62–Cys109, Cys63–Cys97, and Cys116–Cys131.

This sequence belongs to the fungal hydrophobin family. In terms of assembly, self-assembles to form functional amyloid fibrils called rodlets. Self-assembly into fibrillar rodlets occurs spontaneously at hydrophobic:hydrophilic interfaces and the rodlets further associate laterally to form amphipathic monolayers.

It is found in the secreted. The protein localises to the cell wall. Functionally, aerial growth, conidiation, and dispersal of filamentous fungi in the environment rely upon a capability of their secreting small amphipathic proteins called hydrophobins (HPBs) with low sequence identity. Class I can self-assemble into an outermost layer of rodlet bundles on aerial cell surfaces, conferring cellular hydrophobicity that supports fungal growth, development and dispersal; whereas Class II form highly ordered films at water-air interfaces through intermolecular interactions but contribute nothing to the rodlet structure. RodF and rodG belong to Class III, which contains hydrophobins with intermediate (between classes I and II) or atypical characteristics. RodF, unlike rodA, is not required for rodlet formation. This is Class III hydrophobin F from Aspergillus fumigatus (strain ATCC MYA-4609 / CBS 101355 / FGSC A1100 / Af293) (Neosartorya fumigata).